A 142-amino-acid chain; its full sequence is Small heat shock protein IbpB (142 aa).

The sHSP domain maps to 26–137 (TGESQSFPPY…APQRIAISER (112 aa)).

This sequence belongs to the small heat shock protein (HSP20) family. As to quaternary structure, homodimer. Forms homomultimers of about 100-150 subunits at optimal growth temperatures. Conformation changes to oligomers at high temperatures or high ionic concentrations. The decrease in size of the multimers is accompanied by an increase in chaperone activity.

It localises to the cytoplasm. Functionally, associates with aggregated proteins, together with IbpA, to stabilize and protect them from irreversible denaturation and extensive proteolysis during heat shock and oxidative stress. Aggregated proteins bound to the IbpAB complex are more efficiently refolded and reactivated by the ATP-dependent chaperone systems ClpB and DnaK/DnaJ/GrpE. Its activity is ATP-independent. This Citrobacter koseri (strain ATCC BAA-895 / CDC 4225-83 / SGSC4696) protein is Small heat shock protein IbpB.